The following is a 446-amino-acid chain: NADH oxidase (446 aa).

FAD-binding positions include G7–A11, E32, C42, V79, T110–S113, K132, and Y157. H10 (proton acceptor) is an active-site residue. C42 acts as the Redox-active in catalysis. C42 is modified (cysteine sulfinic acid (-SO2H)). Residues V150–A165, D177, Y186, and G243 each bind NAD(+). FAD contacts are provided by residues T271–D281, L298, A299, and T300. G328 is an NAD(+) binding site. Residue F424 coordinates FAD.

Belongs to the class-III pyridine nucleotide-disulfide oxidoreductase family. Homodimer. FAD is required as a cofactor. The N-terminus is blocked.

The enzyme catalyses 2 NADH + O2 + 2 H(+) = 2 NAD(+) + 2 H2O. In terms of biological role, catalyzes the four-electron reduction of molecular oxygen to water. This chain is NADH oxidase (nox), found in Enterococcus faecalis (strain ATCC 700802 / V583).